Consider the following 561-residue polypeptide: Dihydroxy-acid dehydratase (561 aa).

[2Fe-2S] cluster is bound at residue Cys-50. Asp-82 provides a ligand contact to Mg(2+). [2Fe-2S] cluster is bound at residue Cys-123. Residues Asp-124 and Lys-125 each contribute to the Mg(2+) site. Position 125 is an N6-carboxylysine (Lys-125). Cys-195 provides a ligand contact to [2Fe-2S] cluster. Residue Glu-447 coordinates Mg(2+). Ser-473 functions as the Proton acceptor in the catalytic mechanism.

It belongs to the IlvD/Edd family. Homodimer. The cofactor is [2Fe-2S] cluster. Requires Mg(2+) as cofactor.

It catalyses the reaction (2R)-2,3-dihydroxy-3-methylbutanoate = 3-methyl-2-oxobutanoate + H2O. The catalysed reaction is (2R,3R)-2,3-dihydroxy-3-methylpentanoate = (S)-3-methyl-2-oxopentanoate + H2O. The protein operates within amino-acid biosynthesis; L-isoleucine biosynthesis; L-isoleucine from 2-oxobutanoate: step 3/4. It participates in amino-acid biosynthesis; L-valine biosynthesis; L-valine from pyruvate: step 3/4. In terms of biological role, functions in the biosynthesis of branched-chain amino acids. Catalyzes the dehydration of (2R,3R)-2,3-dihydroxy-3-methylpentanoate (2,3-dihydroxy-3-methylvalerate) into 2-oxo-3-methylpentanoate (2-oxo-3-methylvalerate) and of (2R)-2,3-dihydroxy-3-methylbutanoate (2,3-dihydroxyisovalerate) into 2-oxo-3-methylbutanoate (2-oxoisovalerate), the penultimate precursor to L-isoleucine and L-valine, respectively. This Acaryochloris marina (strain MBIC 11017) protein is Dihydroxy-acid dehydratase.